Reading from the N-terminus, the 266-residue chain is Glucosamine-6-phosphate deaminase (266 aa).

Asp72 serves as the catalytic Proton acceptor; for enolization step. Asp141 functions as the For ring-opening step in the catalytic mechanism. Residue His143 is the Proton acceptor; for ring-opening step of the active site. The active-site For ring-opening step is Glu148.

This sequence belongs to the glucosamine/galactosamine-6-phosphate isomerase family. NagB subfamily. In terms of assembly, homohexamer.

It catalyses the reaction alpha-D-glucosamine 6-phosphate + H2O = beta-D-fructose 6-phosphate + NH4(+). It participates in amino-sugar metabolism; N-acetylneuraminate degradation; D-fructose 6-phosphate from N-acetylneuraminate: step 5/5. With respect to regulation, allosterically activated by N-acetylglucosamine 6-phosphate (GlcNAc6P). Functionally, catalyzes the reversible isomerization-deamination of glucosamine 6-phosphate (GlcN6P) to form fructose 6-phosphate (Fru6P) and ammonium ion. This chain is Glucosamine-6-phosphate deaminase, found in Klebsiella pneumoniae subsp. pneumoniae (strain ATCC 700721 / MGH 78578).